Consider the following 484-residue polypeptide: Glutamate mutase epsilon subunit (484 aa).

Arginine 66 serves as a coordination point for L-glutamate. Glycine 68 lines the adenosylcob(III)alamin pocket. Arginine 100 is a binding site for L-glutamate. Asparagine 123 contributes to the adenosylcob(III)alamin binding site. L-glutamate contacts are provided by residues 149 to 150, glutamate 171, and tyrosine 177; that span reads RH. Residue proline 180 coordinates adenosylcob(III)alamin. Tyrosine 181 is a binding site for L-glutamate. Positions 297, 326, 330, and 334 each coordinate adenosylcob(III)alamin.

The protein belongs to the methylaspartate mutase GlmE subunit family. As to quaternary structure, heterotetramer composed of 2 epsilon subunits (GlmE) and 2 sigma subunits (GlmS). GlmE exists as a homodimer and GlmS as a monomer. The cofactor is adenosylcob(III)alamin.

It carries out the reaction (2S,3S)-3-methyl-L-aspartate = L-glutamate. It participates in amino-acid degradation; L-glutamate degradation via mesaconate pathway; acetate and pyruvate from L-glutamate: step 1/4. Catalyzes the carbon skeleton rearrangement of L-glutamate to L-threo-3-methylaspartate ((2S,3S)-3-methylaspartate). This chain is Glutamate mutase epsilon subunit, found in Desulfitobacterium hafniense (strain Y51).